We begin with the raw amino-acid sequence, 331 residues long: Bifunctional nuclease 1 (331 aa).

Residues 126–261 form the BFN domain; it reads CVQNNPRVLR…RIAYNNGLKV (136 aa). Positions 291 to 326 constitute a UVR domain; the sequence is EAQEFDLVRNMLVAAVEERYKDAAQYRDQLFMFRAK.

It belongs to the bifunctional nuclease family.

The protein resides in the nucleus. Its function is as follows. Bifunctional nuclease with both RNase and DNase activities. Involved in basal defense response. Participates in abscisic acid-derived callose deposition following infection by a necrotrophic pathogen. The sequence is that of Bifunctional nuclease 1 (BBD1) from Oryza sativa subsp. indica (Rice).